We begin with the raw amino-acid sequence, 156 residues long: SsrA-binding protein (156 aa).

The protein belongs to the SmpB family.

The protein localises to the cytoplasm. Required for rescue of stalled ribosomes mediated by trans-translation. Binds to transfer-messenger RNA (tmRNA), required for stable association of tmRNA with ribosomes. tmRNA and SmpB together mimic tRNA shape, replacing the anticodon stem-loop with SmpB. tmRNA is encoded by the ssrA gene; the 2 termini fold to resemble tRNA(Ala) and it encodes a 'tag peptide', a short internal open reading frame. During trans-translation Ala-aminoacylated tmRNA acts like a tRNA, entering the A-site of stalled ribosomes, displacing the stalled mRNA. The ribosome then switches to translate the ORF on the tmRNA; the nascent peptide is terminated with the 'tag peptide' encoded by the tmRNA and targeted for degradation. The ribosome is freed to recommence translation, which seems to be the essential function of trans-translation. The polypeptide is SsrA-binding protein (Clostridium beijerinckii (strain ATCC 51743 / NCIMB 8052) (Clostridium acetobutylicum)).